We begin with the raw amino-acid sequence, 436 residues long: ATP-dependent protease ATPase subunit HslU (436 aa).

ATP contacts are provided by residues I19, 61-65 (GVGKT), D249, E314, and R386.

The protein belongs to the ClpX chaperone family. HslU subfamily. In terms of assembly, a double ring-shaped homohexamer of HslV is capped on each side by a ring-shaped HslU homohexamer. The assembly of the HslU/HslV complex is dependent on binding of ATP.

The protein resides in the cytoplasm. ATPase subunit of a proteasome-like degradation complex; this subunit has chaperone activity. The binding of ATP and its subsequent hydrolysis by HslU are essential for unfolding of protein substrates subsequently hydrolyzed by HslV. HslU recognizes the N-terminal part of its protein substrates and unfolds these before they are guided to HslV for hydrolysis. This Bartonella tribocorum (strain CIP 105476 / IBS 506) protein is ATP-dependent protease ATPase subunit HslU.